Consider the following 112-residue polypeptide: UPF0060 membrane protein Mpe_A1656 (112 aa).

The next 4 helical transmembrane spans lie at 9-29 (GLFF…WLVL), 34-54 (SAWL…LLTL), 65-85 (AYGG…DGVV), and 91-111 (LVGG…PRAA).

Belongs to the UPF0060 family.

It localises to the cell inner membrane. This is UPF0060 membrane protein Mpe_A1656 from Methylibium petroleiphilum (strain ATCC BAA-1232 / LMG 22953 / PM1).